Reading from the N-terminus, the 912-residue chain is DNA ligase 4 (912 aa).

The ATP site is built by E271, T272, K273, L274, R278, E331, K345, F367, E427, K432, K449, and K451. Catalysis depends on K273, which acts as the N6-AMP-lysine intermediate. A Mg(2+)-binding site is contributed by E331. E427 is a Mg(2+) binding site. The required for catalytic activity stretch occupies residues 610–620; sequence LATKHLHVGDD. BRCT domains are found at residues 654-743 and 846-912; these read KVSN…PRFM and LRFH…QYLL.

This sequence belongs to the ATP-dependent DNA ligase family. Interacts with XRCC4; the LIG4-XRCC4 subcomplex has a 1:2 stoichiometry and XRCC4 is required for LIG4 stability. Component of the core long-range non-homologous end joining (NHEJ) complex (also named DNA-PK complex) composed of PRKDC, LIG4, XRCC4, XRCC6/Ku70, XRCC5/Ku86 and NHEJ1/XLF. Additional component of the NHEJ complex includes PAXX. Following autophosphorylation, PRKDC dissociates from DNA, leading to formation of the short-range NHEJ complex, composed of LIG4, XRCC4, XRCC6/Ku70, XRCC5/Ku86 and NHEJ1/XLF. Interacts with DCLRE1C; the interaction is direct. Interacts with APLF. Mg(2+) serves as cofactor.

It localises to the nucleus. The enzyme catalyses ATP + (deoxyribonucleotide)n-3'-hydroxyl + 5'-phospho-(deoxyribonucleotide)m = (deoxyribonucleotide)n+m + AMP + diphosphate.. Its function is as follows. DNA ligase involved in DNA non-homologous end joining (NHEJ); required for double-strand break (DSB) repair and V(D)J recombination. Catalyzes the NHEJ ligation step of the broken DNA during DSB repair by resealing the DNA breaks after the gap filling is completed. Joins single-strand breaks in a double-stranded polydeoxynucleotide in an ATP-dependent reaction. LIG4 is mechanistically flexible: it can ligate nicks as well as compatible DNA overhangs alone, while in the presence of XRCC4, it can ligate ends with 2-nucleotides (nt) microhomology and 1-nt gaps. Forms a subcomplex with XRCC4; the LIG4-XRCC4 subcomplex is responsible for the NHEJ ligation step and XRCC4 enhances the joining activity of LIG4. Binding of the LIG4-XRCC4 complex to DNA ends is dependent on the assembly of the DNA-dependent protein kinase complex DNA-PK to these DNA ends. LIG4 regulates nuclear localization of XRCC4. The polypeptide is DNA ligase 4 (Cricetulus griseus (Chinese hamster)).